Reading from the N-terminus, the 92-residue chain is UPF0250 protein XAC0666 (92 aa).

It belongs to the UPF0250 family.

This is UPF0250 protein XAC0666 from Xanthomonas axonopodis pv. citri (strain 306).